The following is a 132-amino-acid chain: Venom CUB domain-containing protein 2 (132 aa).

Residues 1–17 (MKTLFLAIALFSAVALA) form the signal peptide. One can recognise a CUB domain in the interval 22 to 129 (ESAELVPGGE…RGFVACKATA (108 aa)). Cystine bridges form between cysteine 66/cysteine 125 and cysteine 77/cysteine 94.

Belongs to the venom CUB family. Expressed by the venom gland (posterior main gland) (at protein level).

The protein localises to the secreted. The polypeptide is Venom CUB domain-containing protein 2 (Platymeris rhadamanthus (Red spot assassin bug)).